We begin with the raw amino-acid sequence, 585 residues long: Acetolactate synthase large subunit (585 aa).

Glu60 is a thiamine diphosphate binding site. FAD contacts are provided by residues Arg162, 272 to 293, and 315 to 334; these read HGTA…LGAR and DIDP…IISD. A thiamine pyrophosphate binding region spans residues 407–486; sequence QHQMWAAQFL…IKIFIINNQW (80 aa). Mg(2+) is bound by residues Asp457 and Asn484.

The protein belongs to the TPP enzyme family. In terms of assembly, dimer of large and small chains. The cofactor is Mg(2+). Thiamine diphosphate is required as a cofactor.

Its subcellular location is the plastid. The protein resides in the chloroplast. The enzyme catalyses 2 pyruvate + H(+) = (2S)-2-acetolactate + CO2. It functions in the pathway amino-acid biosynthesis; L-isoleucine biosynthesis; L-isoleucine from 2-oxobutanoate: step 1/4. Its pathway is amino-acid biosynthesis; L-valine biosynthesis; L-valine from pyruvate: step 1/4. In Cyanidium caldarium (Red alga), this protein is Acetolactate synthase large subunit (ilvB).